The sequence spans 391 residues: Ferrochelatase (391 aa).

His-196 and Glu-281 together coordinate Fe cation.

This sequence belongs to the ferrochelatase family.

It localises to the cytoplasm. The catalysed reaction is heme b + 2 H(+) = protoporphyrin IX + Fe(2+). It participates in porphyrin-containing compound metabolism; protoheme biosynthesis; protoheme from protoporphyrin-IX: step 1/1. Catalyzes the ferrous insertion into protoporphyrin IX. The polypeptide is Ferrochelatase (Prochlorococcus marinus (strain MIT 9312)).